The primary structure comprises 628 residues: 1-deoxy-D-xylulose-5-phosphate synthase (628 aa).

Thiamine diphosphate contacts are provided by residues His72 and 113–115 (GHS). Asp144 contributes to the Mg(2+) binding site. Thiamine diphosphate is bound by residues 145–146 (GA), Asn173, Tyr284, and Glu367. Asn173 is a binding site for Mg(2+).

It belongs to the transketolase family. DXPS subfamily. Homodimer. It depends on Mg(2+) as a cofactor. The cofactor is thiamine diphosphate.

It carries out the reaction D-glyceraldehyde 3-phosphate + pyruvate + H(+) = 1-deoxy-D-xylulose 5-phosphate + CO2. It functions in the pathway metabolic intermediate biosynthesis; 1-deoxy-D-xylulose 5-phosphate biosynthesis; 1-deoxy-D-xylulose 5-phosphate from D-glyceraldehyde 3-phosphate and pyruvate: step 1/1. In terms of biological role, catalyzes the acyloin condensation reaction between C atoms 2 and 3 of pyruvate and glyceraldehyde 3-phosphate to yield 1-deoxy-D-xylulose-5-phosphate (DXP). The sequence is that of 1-deoxy-D-xylulose-5-phosphate synthase from Exiguobacterium sibiricum (strain DSM 17290 / CCUG 55495 / CIP 109462 / JCM 13490 / 255-15).